The following is a 466-amino-acid chain: GATA-binding factor 2 (466 aa).

Low complexity-rich tracts occupy residues 139-155 (GSST…TPAS) and 174-188 (PDPN…SSSA). The segment at 139-196 (GSSTSSTASVSSLTPASHSGSHLFGFPPTPPKEVSPDPNSTSAASPSSSAGARQEDKD) is disordered. GATA-type zinc fingers lie at residues 281–305 (CVNC…CNAC) and 335–359 (CANC…CNAC). A disordered region spans residues 436–466 (GHILPTPTPIHPSSSISFGHPHPSSMVTAMG).

As to expression, expressed in all developmental stages of erythroid cells but is additionally found in a limited subset of other tissues.

The protein localises to the nucleus. Functionally, transcriptional activator which probably serves as a general switch factor for cell-specific development. It binds to DNA sites with the consensus sequence 5'-[AT]GATA[AG]-3' within regulatory regions of genes. This Gallus gallus (Chicken) protein is GATA-binding factor 2 (GATA2).